The primary structure comprises 122 residues: Large ribosomal subunit protein bL12 (122 aa).

It belongs to the bacterial ribosomal protein bL12 family. In terms of assembly, homodimer. Part of the ribosomal stalk of the 50S ribosomal subunit. Forms a multimeric L10(L12)X complex, where L10 forms an elongated spine to which 2 to 4 L12 dimers bind in a sequential fashion. Binds GTP-bound translation factors.

Functionally, forms part of the ribosomal stalk which helps the ribosome interact with GTP-bound translation factors. Is thus essential for accurate translation. The chain is Large ribosomal subunit protein bL12 from Pasteurella multocida (strain Pm70).